Reading from the N-terminus, the 246-residue chain is Bis(5'-nucleosyl)-tetraphosphatase PrpE [asymmetrical] (246 aa).

Belongs to the PrpE family. Requires Ni(2+) as cofactor.

The enzyme catalyses P(1),P(4)-bis(5'-guanosyl) tetraphosphate + H2O = GMP + GTP + 2 H(+). In terms of biological role, asymmetrically hydrolyzes Ap4p to yield AMP and ATP. In Bacillus cereus (strain ATCC 14579 / DSM 31 / CCUG 7414 / JCM 2152 / NBRC 15305 / NCIMB 9373 / NCTC 2599 / NRRL B-3711), this protein is Bis(5'-nucleosyl)-tetraphosphatase PrpE [asymmetrical].